Here is a 141-residue protein sequence, read N- to C-terminus: Protein NrdI (141 aa).

Belongs to the NrdI family.

Functionally, probably involved in ribonucleotide reductase function. This is Protein NrdI from Wigglesworthia glossinidia brevipalpis.